Consider the following 166-residue polypeptide: Ribonuclease P protein component (166 aa).

It belongs to the RnpA family. As to quaternary structure, consists of a catalytic RNA component (M1 or rnpB) and a protein subunit.

The enzyme catalyses Endonucleolytic cleavage of RNA, removing 5'-extranucleotides from tRNA precursor.. Functionally, RNaseP catalyzes the removal of the 5'-leader sequence from pre-tRNA to produce the mature 5'-terminus. It can also cleave other RNA substrates such as 4.5S RNA. The protein component plays an auxiliary but essential role in vivo by binding to the 5'-leader sequence and broadening the substrate specificity of the ribozyme. The polypeptide is Ribonuclease P protein component (Helicobacter pylori (strain HPAG1)).